A 178-amino-acid polypeptide reads, in one-letter code: Methyltransferase flvH (178 aa).

The Post-SET domain occupies 120–136; it reads QPFNCFCGSQNCLGLIA. Positions 124, 126, and 131 each coordinate Zn(2+).

This sequence belongs to the class V-like SAM-binding methyltransferase superfamily.

It carries out the reaction L-lysine + 2 S-adenosyl-L-methionine = N(6),N(6)-dimethyl-L-lysine + 2 S-adenosyl-L-homocysteine + 2 H(+). Its pathway is secondary metabolite biosynthesis; terpenoid biosynthesis. Methyltransferase; part of the gene cluster that mediates the biosynthesis of flavunoidine, an alkaloidal terpenoid with a tetracyclic cage-like core connected to dimethylcadaverine via a C-N bond and acylated with 5,5-dimethyl-L-pipecolate. The tetracyclic core is synthesized by the terpene cyclase flvE and the cytochrome P450 monooxygenase flvD. The terpene cyclase flvE catalyzes the cyclization of farnesyl pyrophosphate (FPP) to form (1R,4R,5S)-(+)-acoradiene and the cytochrome P450 monooxygenase flvD is then responsible for oxidative conversion of (1R,4R,5S)-(+)-acoradiene into the tetracyclic cage present in the final product flavunoidine. In parallel, the N-methyltransferase flvH dimethylates L-lysine to give N,N-dimethyl-L-Lysin which is decarboxylated by flvG to afford dimethylcadaverine. The terpene cyclase-like protein flvF is the enzyme that attaches the dimethylcadaverine precusor at the C-7 of the tetracyclic cage to yield pre-flavunoidine. The cytochrome monooxygenase flvC hydroxylates the C-10 position of pre-flavunoidine whereas the NRPS flvI acylates the terpenoid core at the hydroxylated C-10 with dimethylpipecolate to yield final flavunoidine. The bifunctional enzyme flvA and the dehydrogenase flvB are responsible for the synthesis of the dimethylpipecolate precursor. The PLP-dependent lyase domain of flvA might use L-O-acetyl-homoserine and alpha-keto-isovalerate to form an intermediary ketone that can cyclize intramolecularly to yield an imine. The imine can be reduced by flvB to yield the 6-carboxylated pipecolate. The C-terminal alpha-KG-dependent oxygenase domain of flvA is then proposed to catalyze the decarboxylation to yield dimethylpipecolate. The polypeptide is Methyltransferase flvH (Aspergillus flavus (strain ATCC 200026 / FGSC A1120 / IAM 13836 / NRRL 3357 / JCM 12722 / SRRC 167)).